The sequence spans 396 residues: 3-hydroxykynurenine transaminase (396 aa).

A binds to and confers specificity for 3-hydroxykynurenine; shared with dimeric partner region spans residues 43–44; that stretch reads SN. Pyridoxal 5'-phosphate-binding positions include 77–79, Ser154, and Gln204; that span reads SAH. Ser154 is a binding site for substrate. The residue at position 205 (Lys205) is an N6-(pyridoxal phosphate)lysine. Pyridoxal 5'-phosphate is bound by residues Tyr256 and Thr259. Substrate is bound at residue Arg356.

This sequence belongs to the class-V pyridoxal-phosphate-dependent aminotransferase family. As to quaternary structure, homodimer. Pyridoxal 5'-phosphate serves as cofactor. In terms of tissue distribution, expressed in gut and ovaries.

It is found in the peroxisome. The enzyme catalyses L-kynurenine + glyoxylate = kynurenate + glycine + H2O. It catalyses the reaction 3-hydroxy-L-kynurenine + glyoxylate = xanthurenate + glycine + H2O. It carries out the reaction 3-hydroxy-L-kynurenine + pyruvate = xanthurenate + L-alanine + H2O. The catalysed reaction is glyoxylate + L-alanine = glycine + pyruvate. Its pathway is amino-acid degradation; L-kynurenine degradation; kynurenate from L-kynurenine: step 1/2. Its function is as follows. Catalyzes the pyridoxal 5'-phosphate-dependent transamination of both 3-hydroxykynurenine and L-kynurenine to xanthurenic acid and kynurenic acid, respectively, preferentially using the alpha-ketoacid glyoxylate as the amino group acceptor. Although glyoxylate is the preferred amino group acceptor, transamination of 3-hydroxykynurenine also works with pyruvate as the amino acceptor in vitro. Involved in the detoxification of cytotoxic metabolite 3-hydroxykynurenine generated by the hydroxylation of L-kynurenine, an intermediate in the tryptophan catabolism pathway. The Plasmodium parasite uses xanthurenic acid produced in the midgut to activate its gametocytes ingested during a blood meal. Also catalyzes, although with a lesser efficiency, the transamination of alanine with glyoxylate as an amino group acceptor. May play a role in the detoxification of glyoxylate, a toxic plant metabolite from the diet. The polypeptide is 3-hydroxykynurenine transaminase (Anopheles gambiae (African malaria mosquito)).